We begin with the raw amino-acid sequence, 180 residues long: Translation initiation factor IF-3 (180 aa).

The protein belongs to the IF-3 family. As to quaternary structure, monomer.

It localises to the cytoplasm. Functionally, IF-3 binds to the 30S ribosomal subunit and shifts the equilibrium between 70S ribosomes and their 50S and 30S subunits in favor of the free subunits, thus enhancing the availability of 30S subunits on which protein synthesis initiation begins. The chain is Translation initiation factor IF-3 from Mesoplasma florum (strain ATCC 33453 / NBRC 100688 / NCTC 11704 / L1) (Acholeplasma florum).